A 681-amino-acid chain; its full sequence is Potassium-transporting ATPase ATP-binding subunit (681 aa).

A run of 4 helical transmembrane segments spans residues 37 to 57, 64 to 84, 218 to 238, and 255 to 275; these read MFVV…PTYF, VGYN…ANFA, IALT…VMTL, and IALL…AIGI. Asp-306 functions as the 4-aspartylphosphate intermediate in the catalytic mechanism. Residues Asp-343, Glu-347, 375–382, and Lys-394 each bind ATP; that span reads FSAETRMS. 2 residues coordinate Mg(2+): Asp-517 and Asp-521. 3 helical membrane passes run 573 to 595, 615 to 635, and 655 to 675; these read ALTT…AIIS, AILS…PIAM, and IYGL…DMII.

This sequence belongs to the cation transport ATPase (P-type) (TC 3.A.3) family. Type IA subfamily. As to quaternary structure, the system is composed of three essential subunits: KdpA, KdpB and KdpC.

It is found in the cell membrane. The enzyme catalyses K(+)(out) + ATP + H2O = K(+)(in) + ADP + phosphate + H(+). Functionally, part of the high-affinity ATP-driven potassium transport (or Kdp) system, which catalyzes the hydrolysis of ATP coupled with the electrogenic transport of potassium into the cytoplasm. This subunit is responsible for energy coupling to the transport system and for the release of the potassium ions to the cytoplasm. The polypeptide is Potassium-transporting ATPase ATP-binding subunit (Caldanaerobacter subterraneus subsp. tengcongensis (strain DSM 15242 / JCM 11007 / NBRC 100824 / MB4) (Thermoanaerobacter tengcongensis)).